The sequence spans 412 residues: 2,3-bisphosphoglycerate-independent phosphoglycerate mutase (412 aa).

This sequence belongs to the BPG-independent phosphoglycerate mutase family. A-PGAM subfamily.

The enzyme catalyses (2R)-2-phosphoglycerate = (2R)-3-phosphoglycerate. Its pathway is carbohydrate degradation; glycolysis; pyruvate from D-glyceraldehyde 3-phosphate: step 3/5. In terms of biological role, catalyzes the interconversion of 2-phosphoglycerate and 3-phosphoglycerate. This chain is 2,3-bisphosphoglycerate-independent phosphoglycerate mutase, found in Methanobrevibacter smithii (strain ATCC 35061 / DSM 861 / OCM 144 / PS).